Here is a 735-residue protein sequence, read N- to C-terminus: Trafficking protein particle complex subunit 12 (735 aa).

Disordered regions lie at residues 1–204 (MEDA…QPSP) and 237–276 (NPGA…PPAS). Residues 13–22 (PEAPHPPQLA) are compositionally biased toward pro residues. Residues 34–50 (ETIDLGGDEFGSEENET) are compositionally biased toward acidic residues. Residues Ser-109 and Ser-184 each carry the phosphoserine modification. TPR repeat units follow at residues 545-578 (GRVM…YPEQ), 580-613 (PQLL…TQKL), 620-653 (IMVL…DPRN), and 654-687 (AVAN…DPRH).

In terms of assembly, component of the multisubunit TRAPP (transport protein particle) complex, which includes at least TRAPPC2, TRAPPC2L, TRAPPC3, TRAPPC3L, TRAPPC4, TRAPPC5, TRAPPC8, TRAPPC9, TRAPPC10, TRAPPC11 and TRAPPC12. Interacts with CENPE. Post-translationally, phosphorylated as the cells enter mitosis but is dephosphorylated at or before the onset of anaphase. The phosphorylated form recruits CENPE to kinetochores more efficiently than the non-phosphorylated form.

It is found in the endoplasmic reticulum-Golgi intermediate compartment. The protein resides in the nucleus. Component of the TRAPP complex, which is involved in endoplasmic reticulum to Golgi apparatus trafficking at a very early stage. Also plays a role in chromosome congression, kinetochore assembly and stability and controls the recruitment of CENPE to the kinetochores. The sequence is that of Trafficking protein particle complex subunit 12 from Homo sapiens (Human).